Consider the following 515-residue polypeptide: Cytochrome P450 1A2 (515 aa).

Residue Ser-69 is glycosylated (O-linked (GlcNAc) serine). Phe-226 is a substrate binding site. Cys-458 is a binding site for heme.

The protein belongs to the cytochrome P450 family. Interacts with PGRMC1; the interaction requires PGRMC1 homodimerization. The cofactor is heme.

It is found in the endoplasmic reticulum membrane. The protein localises to the microsome membrane. The enzyme catalyses an organic molecule + reduced [NADPH--hemoprotein reductase] + O2 = an alcohol + oxidized [NADPH--hemoprotein reductase] + H2O + H(+). It catalyses the reaction 17beta-estradiol + reduced [NADPH--hemoprotein reductase] + O2 = 2-hydroxy-17beta-estradiol + oxidized [NADPH--hemoprotein reductase] + H2O + H(+). The catalysed reaction is 17beta-estradiol + reduced [NADPH--hemoprotein reductase] + O2 = 4-hydroxy-17beta-estradiol + oxidized [NADPH--hemoprotein reductase] + H2O + H(+). It carries out the reaction estrone + reduced [NADPH--hemoprotein reductase] + O2 = 2-hydroxyestrone + oxidized [NADPH--hemoprotein reductase] + H2O + H(+). The enzyme catalyses estrone + reduced [NADPH--hemoprotein reductase] + O2 = 4-hydroxyestrone + oxidized [NADPH--hemoprotein reductase] + H2O + H(+). It catalyses the reaction cholesterol + reduced [NADPH--hemoprotein reductase] + O2 = 25-hydroxycholesterol + oxidized [NADPH--hemoprotein reductase] + H2O + H(+). The catalysed reaction is all-trans-retinol + reduced [NADPH--hemoprotein reductase] + O2 = all-trans-retinal + oxidized [NADPH--hemoprotein reductase] + 2 H2O + H(+). It carries out the reaction all-trans-retinal + reduced [NADPH--hemoprotein reductase] + O2 = all-trans-retinoate + oxidized [NADPH--hemoprotein reductase] + H2O + 2 H(+). The enzyme catalyses (5Z,8Z,11Z,14Z)-eicosatetraenoate + reduced [NADPH--hemoprotein reductase] + O2 = (14R,15S)-epoxy-(5Z,8Z,11Z)-eicosatrienoate + oxidized [NADPH--hemoprotein reductase] + H2O + H(+). It catalyses the reaction (5Z,8Z,11Z,14Z)-eicosatetraenoate + reduced [NADPH--hemoprotein reductase] + O2 = (14S,15R)-epoxy-(5Z,8Z,11Z)-eicosatrienoate + oxidized [NADPH--hemoprotein reductase] + H2O + H(+). The catalysed reaction is (5Z,8Z,11Z,14Z,17Z)-eicosapentaenoate + reduced [NADPH--hemoprotein reductase] + O2 = (17R,18S)-epoxy-(5Z,8Z,11Z,14Z)-eicosatetraenoate + oxidized [NADPH--hemoprotein reductase] + H2O + H(+). It carries out the reaction (4Z,7Z,10Z,13Z,16Z,19Z)-docosahexaenoate + reduced [NADPH--hemoprotein reductase] + O2 = (19R,20S)-epoxy-(4Z,7Z,10Z,13Z,16Z)-docosapentaenoate + oxidized [NADPH--hemoprotein reductase] + H2O + H(+). The enzyme catalyses (5S)-hydroperoxy-(6E,8Z,11Z,14Z)-eicosatetraenoate = 5-oxo-(6E,8Z,11Z,14Z)-eicosatetraenoate + H2O. It catalyses the reaction (12S)-hydroperoxy-(5Z,8Z,10E,14Z)-eicosatetraenoate = 12-oxo-(5Z,8Z,10E,14Z)-eicosatetraenoate + H2O. The catalysed reaction is (15S)-hydroperoxy-(5Z,8Z,11Z,13E)-eicosatetraenoate = 15-oxo-(5Z,8Z,11Z,13E)-eicosatetraenoate + H2O. It carries out the reaction (13S)-hydroperoxy-(9Z,11E)-octadecadienoate = 13-oxo-(9Z,11E)-octadecadienoate + H2O. The enzyme catalyses (5Z,8Z,11Z,14Z)-eicosatetraenoate + reduced [NADPH--hemoprotein reductase] + O2 = 13-hydroxy-(5Z,8Z,11Z,14Z)-eicosatetraenoate + oxidized [NADPH--hemoprotein reductase] + H2O + H(+). It catalyses the reaction (5Z,8Z,11Z,14Z)-eicosatetraenoate + reduced [NADPH--hemoprotein reductase] + O2 = 19-hydroxy-(5Z,8Z,11Z,14Z)-eicosatetraenoate + oxidized [NADPH--hemoprotein reductase] + H2O + H(+). The catalysed reaction is (9Z,12Z)-octadecadienoate + reduced [NADPH--hemoprotein reductase] + O2 = 11-hydroxy-(9Z,12Z)-octadecadienoate + oxidized [NADPH--hemoprotein reductase] + H2O + H(+). It functions in the pathway cofactor metabolism; retinol metabolism. The protein operates within steroid metabolism; cholesterol metabolism. It participates in lipid metabolism; arachidonate metabolism. Its function is as follows. A cytochrome P450 monooxygenase involved in the metabolism of various endogenous substrates, including fatty acids, steroid hormones and vitamins. Mechanistically, uses molecular oxygen inserting one oxygen atom into a substrate, and reducing the second into a water molecule, with two electrons provided by NADPH via cytochrome P450 reductase (NADPH--hemoprotein reductase). Catalyzes the hydroxylation of carbon-hydrogen bonds. Exhibits high catalytic activity for the formation of hydroxyestrogens from estrone (E1) and 17beta-estradiol (E2), namely 2-hydroxy E1 and E2. Metabolizes cholesterol toward 25-hydroxycholesterol, a physiological regulator of cellular cholesterol homeostasis. May act as a major enzyme for all-trans retinoic acid biosynthesis in the liver. Catalyzes two successive oxidative transformation of all-trans retinol to all-trans retinal and then to the active form all-trans retinoic acid. Primarily catalyzes stereoselective epoxidation of the last double bond of polyunsaturated fatty acids (PUFA), displaying a strong preference for the (R,S) stereoisomer. Catalyzes bisallylic hydroxylation and omega-1 hydroxylation of PUFA. May also participate in eicosanoids metabolism by converting hydroperoxide species into oxo metabolites (lipoxygenase-like reaction, NADPH-independent). Plays a role in the oxidative metabolism of xenobiotics. Catalyzes the N-hydroxylation of heterocyclic amines and the O-deethylation of phenacetin. Metabolizes caffeine via N3-demethylation. The polypeptide is Cytochrome P450 1A2 (CYP1A2) (Cavia porcellus (Guinea pig)).